Here is a 656-residue protein sequence, read N- to C-terminus: Replication protein A 70 kDa DNA-binding subunit A (656 aa).

The OB DNA-binding region spans 225–307; the sequence is AIKARVTAKG…NHLNNEWEIL (83 aa). The C4-type zinc finger occupies 516-542; it reads CPNMIGDRQCNKKVTKSTNGNWTCDKC.

It belongs to the replication factor A protein 1 family. As to quaternary structure, heterotrimer of RPA1, RPA2 and RPA3 (canonical replication protein A complex). Interacts with RPA2B. In terms of tissue distribution, expressed in root tips, roots, shoot apical meristem (SAM), young leaves, flag leaves and ears, and at lower levels in mature leaves.

It localises to the nucleus. Component of the replication protein A complex (RPA) required for DNA recombination, repair and replication. The activity of RPA is mediated by single-stranded DNA binding and protein interactions. Plays an essential role in meiotic and somatic DNA repair, but is dispensable for DNA replication and homologous recombination. Is essential for normal progression through meiosis in pollen mother cells. Is involved in repair of double-strand DNA breaks (DSBs) induced by genotoxic stresses. The chain is Replication protein A 70 kDa DNA-binding subunit A (RPA1A) from Oryza sativa subsp. japonica (Rice).